The chain runs to 239 residues: Orotidine 5'-phosphate decarboxylase (239 aa).

Substrate-binding positions include D15, K36, 63 to 72, T127, R189, Q198, G218, and R219; that span reads DLKFHDIPNT. The active-site Proton donor is the K65.

The protein belongs to the OMP decarboxylase family. Type 1 subfamily. Homodimer.

The catalysed reaction is orotidine 5'-phosphate + H(+) = UMP + CO2. It participates in pyrimidine metabolism; UMP biosynthesis via de novo pathway; UMP from orotate: step 2/2. Its function is as follows. Catalyzes the decarboxylation of orotidine 5'-monophosphate (OMP) to uridine 5'-monophosphate (UMP). This chain is Orotidine 5'-phosphate decarboxylase, found in Prochlorococcus marinus subsp. pastoris (strain CCMP1986 / NIES-2087 / MED4).